A 312-amino-acid polypeptide reads, in one-letter code: Acetylglutamate kinase (312 aa).

Substrate-binding positions include 76–77 (GG), Arg98, and Asn199.

Belongs to the acetylglutamate kinase family. ArgB subfamily.

Its subcellular location is the cytoplasm. It catalyses the reaction N-acetyl-L-glutamate + ATP = N-acetyl-L-glutamyl 5-phosphate + ADP. The protein operates within amino-acid biosynthesis; L-arginine biosynthesis; N(2)-acetyl-L-ornithine from L-glutamate: step 2/4. Its function is as follows. Catalyzes the ATP-dependent phosphorylation of N-acetyl-L-glutamate. The chain is Acetylglutamate kinase from Beutenbergia cavernae (strain ATCC BAA-8 / DSM 12333 / CCUG 43141 / JCM 11478 / NBRC 16432 / NCIMB 13614 / HKI 0122).